The sequence spans 263 residues: Tryptophan synthase alpha chain (263 aa).

Catalysis depends on proton acceptor residues E47 and D58.

The protein belongs to the TrpA family. In terms of assembly, tetramer of two alpha and two beta chains.

The protein localises to the plastid. Its subcellular location is the chloroplast. The catalysed reaction is (1S,2R)-1-C-(indol-3-yl)glycerol 3-phosphate + L-serine = D-glyceraldehyde 3-phosphate + L-tryptophan + H2O. The protein operates within amino-acid biosynthesis; L-tryptophan biosynthesis; L-tryptophan from chorismate: step 5/5. In terms of biological role, the alpha subunit is responsible for the aldol cleavage of indoleglycerol phosphate to indole and glyceraldehyde 3-phosphate. This is Tryptophan synthase alpha chain from Pyropia yezoensis (Susabi-nori).